The primary structure comprises 1761 residues: 6-methylsalicylic acid synthase AOL_s00215g283 (1761 aa).

One can recognise a Ketosynthase family 3 (KS3) domain in the interval Gln18 to Gln443. Catalysis depends on for beta-ketoacyl synthase activity residues Cys190, His325, and His367. The malonyl-CoA:ACP transacylase (MAT) domain stretch occupies residues Val554–Ala870. The active-site For malonyltransferase activity is Ser641. The segment at His918–Lys1038 is N-terminal hotdog fold. A dehydratase (DH) domain region spans residues His918–Gly1187. Residues His918–Ala1191 form the PKS/mFAS DH domain. Catalysis depends on His950, which acts as the Proton acceptor; for dehydratase activity. The C-terminal hotdog fold stretch occupies residues Leu1050–Ala1191. Residue Asp1113 is the Proton donor; for dehydratase activity of the active site. Residues Gly1399 to Asn1587 form a ketoreductase (KR) domain region. The segment at Pro1654–Ser1680 is disordered. The Carrier domain occupies Glu1686–Ile1761. Residue Ser1721 is modified to O-(pantetheine 4'-phosphoryl)serine.

It carries out the reaction 3 malonyl-CoA + acetyl-CoA + NADPH + 3 H(+) = 6-methylsalicylate + 3 CO2 + NADP(+) + 4 CoA + H2O. The protein operates within secondary metabolite biosynthesis; terpenoid biosynthesis. Functionally, 6-methylsalicylic acid synthase; part of the gene cluster that mediates the biosynthesis of sesquiterpenyl epoxy-cyclohexenoids (SECs) such as anthrobotrisins and arthrosporols, metabolites that possess a novel hybrid carbon skeleton consisting of a polyketide-derived epoxycyclohexenol combined with a terpenoid-derived monocyclic sesquiterpenol substructure (PKS-PTS hybrid). The SEC pathway plays an important role for fungal soil colonization via decreasing fungal nematode-capturing ability. Within the pathway, the polyketide synthase (PKS) AOL_s00215g283 catalyzes the biosynthesis of 6-methylsalicylic acid (6-MSA) via condensation of 1 acetate and 3 malonate units. AOL_s00215g283 performs a series of programmed reactions including Claisen condensation, dehydration, reduction, and cyclization to yield 6-MSA. The pathway begins with the biosynthesis of 6-methylsalicylic acid (6-MSA), the first precursor of the polyketide-derived epoxycyclohexenol in arthrosporols, by the polyketide synthase (PKS) AOL_s00215g283. The 6-methylsalicylic acid decarboxylase AOL_s00215g281 then catalyzes the decarboxylation of 6-methylsalicylic acid to yield m-cresol. The cytochrome P450 monooxygenase AOL_s00215g282 further oxidizes m-cresol to yield toluquinol. With the assistance of the oxidoreductase AOL_s00215g277, the polyprenyl transferase AOL_s00215g276 catalyzes the farnesylation of toluquinol to produce farnesyl hydroquinone, the hybrid precursor for biosynthesis of SECs. Farnesyl hydroquinone undergoes epoxidation and then subsequent dehydrogenation to form farnesyl epoxy-quinone, the first and simplest SEC. The cytochrome P450 monooxygenase AOL_s00215g278 and the FAD-dependent monooxygenase AOL_s00215g279 might be involved in the oxygenation of the phenol moiety, most likely in the epoxy formation. The cytochrome P450 monooxygenases AOL_s00215g274 and AOL_s00215g280 are involved in specific regional ketone reductions at respectively C-4 and C-1 of farnesyl epoxy-quinone PubMed:33823587. The chain is 6-methylsalicylic acid synthase AOL_s00215g283 from Arthrobotrys oligospora (strain ATCC 24927 / CBS 115.81 / DSM 1491) (Nematode-trapping fungus).